The sequence spans 141 residues: Large ribosomal subunit protein uL16 (141 aa).

Belongs to the universal ribosomal protein uL16 family. In terms of assembly, part of the 50S ribosomal subunit.

Its function is as follows. Binds 23S rRNA and is also seen to make contacts with the A and possibly P site tRNAs. The polypeptide is Large ribosomal subunit protein uL16 (Campylobacter concisus (strain 13826)).